The chain runs to 133 residues: Small ribosomal subunit protein uS8 (133 aa).

This sequence belongs to the universal ribosomal protein uS8 family. Part of the 30S ribosomal subunit. Contacts proteins S5 and S12.

Its function is as follows. One of the primary rRNA binding proteins, it binds directly to 16S rRNA central domain where it helps coordinate assembly of the platform of the 30S subunit. The protein is Small ribosomal subunit protein uS8 of Nostoc punctiforme (strain ATCC 29133 / PCC 73102).